The sequence spans 591 residues: Aspartate--tRNA(Asp/Asn) ligase (591 aa).

L-aspartate is bound at residue glutamate 175. The interval 199–202 (QQFK) is aspartate. L-aspartate contacts are provided by arginine 221 and histidine 453. ATP is bound at residue 221-223 (RDE). Glutamate 486 contributes to the ATP binding site. An L-aspartate-binding site is contributed by arginine 493. ATP is bound at residue 538-541 (GIDR).

Belongs to the class-II aminoacyl-tRNA synthetase family. Type 1 subfamily. Homodimer.

The protein resides in the cytoplasm. It catalyses the reaction tRNA(Asx) + L-aspartate + ATP = L-aspartyl-tRNA(Asx) + AMP + diphosphate. Functionally, aspartyl-tRNA synthetase with relaxed tRNA specificity since it is able to aspartylate not only its cognate tRNA(Asp) but also tRNA(Asn). Reaction proceeds in two steps: L-aspartate is first activated by ATP to form Asp-AMP and then transferred to the acceptor end of tRNA(Asp/Asn). In Cereibacter sphaeroides (strain ATCC 17029 / ATH 2.4.9) (Rhodobacter sphaeroides), this protein is Aspartate--tRNA(Asp/Asn) ligase.